A 163-amino-acid chain; its full sequence is Sperm surface protein Sp17 (163 aa).

2 disordered regions span residues 57 to 115 (PAEW…EKEE) and 129 to 163 (VARE…THEK). Composition is skewed to basic and acidic residues over residues 62–98 (SKVE…KEEE) and 129–139 (VAREEVKKMKT). The IQ domain occupies 114-143 (EEVAAVKIQAAFRGHVAREEVKKMKTDSLQ). The segment covering 153–163 (DTGFTSRTHEK) has biased composition (polar residues).

In terms of assembly, homodimer. May interact with ROPN1. Testis- and sperm-specific.

It is found in the membrane. Functionally, sperm surface zona pellucida binding protein. Helps to bind spermatozoa to the zona pellucida with high affinity. Might function in binding zona pellucida and carbohydrates. The chain is Sperm surface protein Sp17 (SPA17) from Papio hamadryas (Hamadryas baboon).